Consider the following 267-residue polypeptide: Centromere protein Q (267 aa).

2 stretches are compositionally biased toward basic residues: residues 1–22 and 39–49; these read MSGK…LKQR and KRNRSHAKHLS. Positions 1 to 54 are disordered; that stretch reads MSGKARASRKKPQQVKRSLKQRANKEADLPENEVGNTAKRNRSHAKHLSSKVTG. The residue at position 49 (Ser49) is a Phosphoserine. A coiled-coil region spans residues 100-202; sequence IKRKEEIQCH…EEQEVKQVFH (103 aa).

Belongs to the CENP-Q/OKP1 family. Component of the CENPA-CAD complex, composed of CENPI, CENPK, CENPL, CENPO, CENPP, CENPQ, CENPR and CENPS. The CENPA-CAD complex interacts with the CENPA-NAC complex, at least composed of CENPA, CENPC, CENPH, CENPM, CENPN, CENPT and CENPU. In terms of processing, phosphorylation at Ser-49 is essential for CENPE recruitment to kinetochores and orderly chromosome congression.

The protein localises to the nucleus. It is found in the chromosome. It localises to the centromere. In terms of biological role, component of the CENPA-CAD (nucleosome distal) complex, a complex recruited to centromeres which is involved in assembly of kinetochore proteins, mitotic progression and chromosome segregation. May be involved in incorporation of newly synthesized CENPA into centromeres via its interaction with the CENPA-NAC complex. Plays an important role in chromosome congression and in the recruitment of CENP-O complex (which comprises CENPO, CENPP, CENPQ and CENPU), CENPE and PLK1 to the kinetochores. This is Centromere protein Q (Cenpq) from Mus musculus (Mouse).